A 250-amino-acid chain; its full sequence is NAD(P)H-hydrate epimerase (250 aa).

The region spanning 14–238 (AAALDVELMS…SIAEKYGIQK (225 aa)) is the YjeF N-terminal domain. 74–78 (NNGGD) is a binding site for (6S)-NADPHX. 2 residues coordinate K(+): N75 and D143. (6S)-NADPHX contacts are provided by residues 147–154 (GFSFHGTA), Y159, and D180. Position 183 (S183) interacts with K(+).

Belongs to the NnrE/AIBP family. Requires K(+) as cofactor.

It carries out the reaction (6R)-NADHX = (6S)-NADHX. It catalyses the reaction (6R)-NADPHX = (6S)-NADPHX. Functionally, catalyzes the epimerization of the S- and R-forms of NAD(P)HX, a damaged form of NAD(P)H that is a result of enzymatic or heat-dependent hydration. This is a prerequisite for the S-specific NAD(P)H-hydrate dehydratase to allow the repair of both epimers of NAD(P)HX. The protein is NAD(P)H-hydrate epimerase of Thalassiosira pseudonana (Marine diatom).